The chain runs to 147 residues: Hemoglobin subunit gamma-1 (147 aa).

N-acetylglycine is present on glycine 2. The Globin domain maps to 3-147 (HFTEEDKATI…VASALSSRYH (145 aa)). Threonine 13 bears the Phosphothreonine mark. Residues serine 45, serine 51, and serine 53 each carry the phosphoserine modification. N6-acetyllysine is present on lysine 60. Histidine 64 serves as a coordination point for heme b. Residue lysine 83 is modified to N6-acetyllysine. A heme b-binding site is contributed by histidine 93. Cysteine 94 carries the S-nitrosocysteine modification. The residue at position 140 (serine 140) is a Phosphoserine.

The protein belongs to the globin family. In terms of assembly, heterotetramer of two alpha chains and two gamma chains in fetal hemoglobin (Hb F). The ratio of gamma-G to gamma-A chains in is approximately 2:1 in infant chimpanzee, and 1:2 in the adult. As to expression, red blood cells.

Its function is as follows. Gamma chains make up the fetal hemoglobin F, in combination with alpha chains. This Pan troglodytes (Chimpanzee) protein is Hemoglobin subunit gamma-1 (HBG1).